A 412-amino-acid chain; its full sequence is MTNYRVESSSGRAARKMRLALMGPAFIAAIGYIDPGNFATNIQAGASFGYQLLWVVVWANLMAMLIQILSAKLGIATGKNLAEQIRDHYPRPVVWFYWVQAEIIAMATDLAEFIGAAIGFKLILGVSLLQGAVLTGIATFLILMLQRRGQKPLEKVIGGLLLFVAAAYIVELIFSQPNLAQLGKGMVIPSLPTSEAVFLAAGVLGATIMPHVIYLHSSLTQHLHGGSRQQRYSATKWDVAIAMTIAGFVNLVMMATAAAAFHFSGHTGVADLDEAYLTLQPLLSHAAATVFGLSLVAAGLSSTVVGTLAGQVVMQGFIRFHIPLWVRRTVTMLPSFIVILMGLDPTRILVMSQVLLSFGIALALVPLLIFTSDSKLMGDLVNSKRVKQTGWVIVVLVVALNIWLLVGTALGL.

Topologically, residues 1-19 are cytoplasmic; sequence MTNYRVESSSGRAARKMRL. Residues 20 to 39 traverse the membrane as a helical segment; the sequence is ALMGPAFIAAIGYIDPGNFA. Over 40–51 the chain is Periplasmic; it reads TNIQAGASFGYQ. Residues 52–71 form a helical membrane-spanning segment; the sequence is LLWVVVWANLMAMLIQILSA. The Cytoplasmic portion of the chain corresponds to 72–95; sequence KLGIATGKNLAEQIRDHYPRPVVW. A helical transmembrane segment spans residues 96–118; the sequence is FYWVQAEIIAMATDLAEFIGAAI. Residues 119–125 lie on the Periplasmic side of the membrane; the sequence is GFKLILG. The helical transmembrane segment at 126–145 threads the bilayer; the sequence is VSLLQGAVLTGIATFLILML. Residues 146-155 lie on the Cytoplasmic side of the membrane; it reads QRRGQKPLEK. A helical transmembrane segment spans residues 156–175; that stretch reads VIGGLLLFVAAAYIVELIFS. The Periplasmic segment spans residues 176 to 196; sequence QPNLAQLGKGMVIPSLPTSEA. The chain crosses the membrane as a helical span at residues 197–220; the sequence is VFLAAGVLGATIMPHVIYLHSSLT. Over 221–238 the chain is Cytoplasmic; that stretch reads QHLHGGSRQQRYSATKWD. A helical membrane pass occupies residues 239–258; that stretch reads VAIAMTIAGFVNLVMMATAA. Residues 259 to 276 lie on the Periplasmic side of the membrane; it reads AAFHFSGHTGVADLDEAY. Residues 277–297 form a helical membrane-spanning segment; that stretch reads LTLQPLLSHAAATVFGLSLVA. Residues 298–327 lie on the Cytoplasmic side of the membrane; it reads AGLSSTVVGTLAGQVVMQGFIRFHIPLWVR. Residues 328-344 form a helical membrane-spanning segment; sequence RTVTMLPSFIVILMGLD. The Periplasmic portion of the chain corresponds to 345–350; sequence PTRILV. Residues 351 to 370 traverse the membrane as a helical segment; the sequence is MSQVLLSFGIALALVPLLIF. Residues 371–387 are Cytoplasmic-facing; sequence TSDSKLMGDLVNSKRVK. Residues 388–406 traverse the membrane as a helical segment; sequence QTGWVIVVLVVALNIWLLV. The Periplasmic portion of the chain corresponds to 407–412; it reads GTALGL.

It belongs to the NRAMP family.

It is found in the cell inner membrane. In terms of biological role, h(+)-stimulated, divalent metal cation uptake system. The protein is Divalent metal cation transporter MntH of Shigella flexneri serotype 5b (strain 8401).